The following is a 376-amino-acid chain: Chaperone protein DnaJ (376 aa).

Residues 5 to 70 (DYYEVLGVAK…QKRAAYDQYG (66 aa)) enclose the J domain. The CR-type zinc-finger motif lies at 136–214 (GYDTQIRVPS…CHGSGKVKET (79 aa)). Zn(2+) contacts are provided by cysteine 149, cysteine 152, cysteine 166, cysteine 169, cysteine 188, cysteine 191, cysteine 202, and cysteine 205. 4 CXXCXGXG motif repeats span residues 149-156 (CGICHGSG), 166-173 (CPTCHGQG), 188-195 (CPKCHGTG), and 202-209 (CVHCHGSG).

Belongs to the DnaJ family. In terms of assembly, homodimer. Requires Zn(2+) as cofactor.

The protein localises to the cytoplasm. Its function is as follows. Participates actively in the response to hyperosmotic and heat shock by preventing the aggregation of stress-denatured proteins and by disaggregating proteins, also in an autonomous, DnaK-independent fashion. Unfolded proteins bind initially to DnaJ; upon interaction with the DnaJ-bound protein, DnaK hydrolyzes its bound ATP, resulting in the formation of a stable complex. GrpE releases ADP from DnaK; ATP binding to DnaK triggers the release of the substrate protein, thus completing the reaction cycle. Several rounds of ATP-dependent interactions between DnaJ, DnaK and GrpE are required for fully efficient folding. Also involved, together with DnaK and GrpE, in the DNA replication of plasmids through activation of initiation proteins. This Burkholderia thailandensis (strain ATCC 700388 / DSM 13276 / CCUG 48851 / CIP 106301 / E264) protein is Chaperone protein DnaJ.